Consider the following 355-residue polypeptide: UDP-3-O-acylglucosamine N-acyltransferase (355 aa).

The active-site Proton acceptor is His-248.

Belongs to the transferase hexapeptide repeat family. LpxD subfamily. In terms of assembly, homotrimer.

The enzyme catalyses a UDP-3-O-[(3R)-3-hydroxyacyl]-alpha-D-glucosamine + a (3R)-hydroxyacyl-[ACP] = a UDP-2-N,3-O-bis[(3R)-3-hydroxyacyl]-alpha-D-glucosamine + holo-[ACP] + H(+). It participates in bacterial outer membrane biogenesis; LPS lipid A biosynthesis. Its function is as follows. Catalyzes the N-acylation of UDP-3-O-acylglucosamine using 3-hydroxyacyl-ACP as the acyl donor. Is involved in the biosynthesis of lipid A, a phosphorylated glycolipid that anchors the lipopolysaccharide to the outer membrane of the cell. In Synechococcus elongatus (strain ATCC 33912 / PCC 7942 / FACHB-805) (Anacystis nidulans R2), this protein is UDP-3-O-acylglucosamine N-acyltransferase.